A 315-amino-acid chain; its full sequence is MASYRVAALYRFTRFEDPAAIQGPLAALCCSLGVKGTLLLAREGINGTIAGEDAAIEAVLAHIRALPGCADLTPKTAWAERMPFYRMKVRLKKEIVTLGEPDLDPTDAGTYVEPADWNALISDPDVLVIDTRNAYEVAVGRFEGAIDPQTASFADFPAWFRDWRKSVEAQRGPEAPLKVAMYCTGGIRCEKSTAFLKAEGVEQVFHLKGGVLDYLEQIPQPESLWRGECFVFDERVSVGHGLVKGDHVLCRGCRMPVSPQDQASPLYVEGVACPACHDQRNEEQKARAAERHRQVLHCEALGVDHVGATLPTKID.

The Rhodanese domain maps to 122–223 (SDPDVLVIDT…YLEQIPQPES (102 aa)). Cys183 (cysteine persulfide intermediate) is an active-site residue.

This sequence belongs to the TrhO family.

The catalysed reaction is uridine(34) in tRNA + AH2 + O2 = 5-hydroxyuridine(34) in tRNA + A + H2O. Catalyzes oxygen-dependent 5-hydroxyuridine (ho5U) modification at position 34 in tRNAs. The protein is tRNA uridine(34) hydroxylase of Caulobacter vibrioides (strain ATCC 19089 / CIP 103742 / CB 15) (Caulobacter crescentus).